The chain runs to 115 residues: NAD(P)H-quinone oxidoreductase subunit M, organellar chromatophore (115 aa).

It belongs to the complex I NdhM subunit family. In terms of assembly, NDH-1 can be composed of about 15 different subunits; different subcomplexes with different compositions have been identified which probably have different functions.

It is found in the plastid. The protein resides in the organellar chromatophore thylakoid membrane. The enzyme catalyses a plastoquinone + NADH + (n+1) H(+)(in) = a plastoquinol + NAD(+) + n H(+)(out). It carries out the reaction a plastoquinone + NADPH + (n+1) H(+)(in) = a plastoquinol + NADP(+) + n H(+)(out). Its function is as follows. NDH-1 shuttles electrons from an unknown electron donor, via FMN and iron-sulfur (Fe-S) centers, to quinones in the respiratory and/or the photosynthetic chain. The immediate electron acceptor for the enzyme in this species is believed to be plastoquinone. Couples the redox reaction to proton translocation, and thus conserves the redox energy in a proton gradient. This is NAD(P)H-quinone oxidoreductase subunit M, organellar chromatophore from Paulinella chromatophora.